Consider the following 207-residue polypeptide: Large ribosomal subunit protein uL4 (207 aa).

Residues 49 to 78 (HAVKNRSAVSGGGRKPWRQKGTGRARQGSI) form a disordered region.

Belongs to the universal ribosomal protein uL4 family. As to quaternary structure, part of the 50S ribosomal subunit.

One of the primary rRNA binding proteins, this protein initially binds near the 5'-end of the 23S rRNA. It is important during the early stages of 50S assembly. It makes multiple contacts with different domains of the 23S rRNA in the assembled 50S subunit and ribosome. Functionally, forms part of the polypeptide exit tunnel. The chain is Large ribosomal subunit protein uL4 from Streptococcus suis (strain 98HAH33).